Reading from the N-terminus, the 1028-residue chain is Kinesin-like protein KIF28 (1028 aa).

A Kinesin motor domain is found at 11–358; sequence SVRVAVRVRP…LRYAERAKKV (348 aa). 114-121 is a binding site for ATP; the sequence is GQTGSGKS. One can recognise an FHA domain in the interval 460–523; the sequence is CDVGRAASNA…LQHLDRIILG (64 aa). Residues 873 to 902 adopt a coiled-coil conformation; the sequence is NQVPELYQKLLKLEQETELLRDVNRALRGE.

The protein belongs to the TRAFAC class myosin-kinesin ATPase superfamily. Kinesin family.

It is found in the mitochondrion membrane. Its function is as follows. Microtubule-dependent motor protein required for mitochondrion morphology and transport of mitochondria in neuronal cells. The polypeptide is Kinesin-like protein KIF28 (Mus musculus (Mouse)).